We begin with the raw amino-acid sequence, 60 residues long: Large ribosomal subunit protein bL32 (60 aa).

It belongs to the bacterial ribosomal protein bL32 family.

The chain is Large ribosomal subunit protein bL32 from Pediococcus pentosaceus (strain ATCC 25745 / CCUG 21536 / LMG 10740 / 183-1w).